The primary structure comprises 558 residues: Urease subunit alpha 2 (558 aa).

The 430-residue stretch at 129-558 folds into the Urease domain; the sequence is GAVDTHVHLL…SVSLNRLYFL (430 aa). Residues His-134, His-136, and Lys-214 each coordinate Ni(2+). Position 214 is an N6-carboxylysine (Lys-214). His-216 provides a ligand contact to substrate. Residues His-243 and His-269 each coordinate Ni(2+). His-317 (proton donor) is an active-site residue. Asp-357 is a Ni(2+) binding site.

This sequence belongs to the metallo-dependent hydrolases superfamily. Urease alpha subunit family. In terms of assembly, may form a heterohexamer of 3 UreC (alpha) and 3 UreAB (gamma/beta) subunits. May also form a heterotrimer of UreA (gamma), UreB (beta) and UreC (alpha) subunits. Three heterotrimers associate to form the active enzyme. The cofactor is Ni cation. Carboxylation allows a single lysine to coordinate two nickel ions.

Its subcellular location is the cytoplasm. It catalyses the reaction urea + 2 H2O + H(+) = hydrogencarbonate + 2 NH4(+). It functions in the pathway nitrogen metabolism; urea degradation; CO(2) and NH(3) from urea (urease route): step 1/1. This Streptomyces coelicolor (strain ATCC BAA-471 / A3(2) / M145) protein is Urease subunit alpha 2.